The following is a 755-amino-acid chain: uncharacterized protein (755 aa).

Helical transmembrane passes span 46–66, 70–90, 93–113, 118–138, 143–163, 411–431, 446–466, 482–502, and 514–534; these read LGLGVGLASQLILLADMGGLY, LKTIFGAWVGAAIAMAVGTIV, GWGLGLAITGFVLFASGYLAV, GAMVGIVTTFAFLLGAQNVST, FTSLAIGGMWSLILAIFIWPF, IAHLTQIPYGFWIVITLIFVL, LLGTFLGVLVMSIALKLIQDP, ALLRFHYSVAVFFITAFALIL, and ALLSRLVCTLIGSAIALGLAF.

Belongs to the YccS/YhfK family.

It localises to the cell membrane. This is an uncharacterized protein from Synechocystis sp. (strain ATCC 27184 / PCC 6803 / Kazusa).